Consider the following 103-residue polypeptide: Co-chaperonin GroES (103 aa).

The protein belongs to the GroES chaperonin family. In terms of assembly, heptamer of 7 subunits arranged in a ring. Interacts with the chaperonin GroEL.

It is found in the cytoplasm. Its function is as follows. Together with the chaperonin GroEL, plays an essential role in assisting protein folding. The GroEL-GroES system forms a nano-cage that allows encapsulation of the non-native substrate proteins and provides a physical environment optimized to promote and accelerate protein folding. GroES binds to the apical surface of the GroEL ring, thereby capping the opening of the GroEL channel. This chain is Co-chaperonin GroES, found in Synechococcus sp. (strain CC9902).